The following is a 338-amino-acid chain: Methionyl-tRNA formyltransferase (338 aa).

110-113 (SLLP) is a (6S)-5,6,7,8-tetrahydrofolate binding site.

The protein belongs to the Fmt family.

The catalysed reaction is L-methionyl-tRNA(fMet) + (6R)-10-formyltetrahydrofolate = N-formyl-L-methionyl-tRNA(fMet) + (6S)-5,6,7,8-tetrahydrofolate + H(+). Its function is as follows. Attaches a formyl group to the free amino group of methionyl-tRNA(fMet). The formyl group appears to play a dual role in the initiator identity of N-formylmethionyl-tRNA by promoting its recognition by IF2 and preventing the misappropriation of this tRNA by the elongation apparatus. The polypeptide is Methionyl-tRNA formyltransferase (Synechococcus sp. (strain CC9902)).